We begin with the raw amino-acid sequence, 257 residues long: Probable septum site-determining protein MinC (257 aa).

The span at 123–141 shows a compositional bias: low complexity; the sequence is AVEAAAAPAAEPTPEPGAA. The segment at 123–144 is disordered; that stretch reads AVEAAAAPAAEPTPEPGAASQP.

It belongs to the MinC family. As to quaternary structure, interacts with MinD and FtsZ.

Functionally, cell division inhibitor that blocks the formation of polar Z ring septums. Rapidly oscillates between the poles of the cell to destabilize FtsZ filaments that have formed before they mature into polar Z rings. Prevents FtsZ polymerization. In Burkholderia multivorans (strain ATCC 17616 / 249), this protein is Probable septum site-determining protein MinC.